Consider the following 573-residue polypeptide: N(2)-(2-carboxyethyl)arginine synthase (573 aa).

Substrate contacts are provided by Tyr-271 and Asp-301. 410 to 413 is a binding site for thiamine diphosphate; it reads IGFF. Position 414–415 (414–415) interacts with substrate; the sequence is RH. Residue 436–438 coordinates thiamine diphosphate; that stretch reads SSF. Asp-463 contacts Mg(2+). Thiamine diphosphate contacts are provided by residues 464 to 465, 490 to 495, and Tyr-561; these read GG and NDTNGL. Mg(2+) is bound by residues Asn-490 and Thr-492. A substrate-binding site is contributed by Leu-571.

Homotetramer; dimer of dimers. Mg(2+) serves as cofactor. It depends on thiamine diphosphate as a cofactor.

The catalysed reaction is D-glyceraldehyde 3-phosphate + L-arginine = N(2)-(2-carboxyethyl)-L-arginine + phosphate + H(+). Involved in the biosynthesis of the beta-lactamase inhibitor, clavulanic acid. Catalyzes the thiamine diphosphate (ThDP) dependent condensation of D-glyceraldehyde-3-phosphate (D-G3P) with L-arginine to yield the beta-amino acid, N2-(2-carboxyethyl)arginine (CEA) via a beta-elimination resulting in the formation of an enol which undergoes a second elimination to generate the alpha,beta-unsaturated acryloyl-ThDP. This is N(2)-(2-carboxyethyl)arginine synthase from Streptomyces clavuligerus.